A 594-amino-acid chain; its full sequence is DNA polymerase II small subunit (594 aa).

It belongs to the DNA polymerase delta/II small subunit family. Heterodimer of a large subunit and a small subunit.

It carries out the reaction DNA(n) + a 2'-deoxyribonucleoside 5'-triphosphate = DNA(n+1) + diphosphate. The enzyme catalyses Exonucleolytic cleavage in the 3'- to 5'-direction to yield nucleoside 5'-phosphates.. Functionally, possesses two activities: a DNA synthesis (polymerase) and an exonucleolytic activity that degrades single-stranded DNA in the 3' to 5' direction. Has a template-primer preference which is characteristic of a replicative DNA polymerase. In Methanocaldococcus jannaschii (strain ATCC 43067 / DSM 2661 / JAL-1 / JCM 10045 / NBRC 100440) (Methanococcus jannaschii), this protein is DNA polymerase II small subunit (polB).